Reading from the N-terminus, the 196-residue chain is Ribosome maturation factor RimP (196 aa).

A disordered region spans residues Glu-176–Gln-196. The segment covering Thr-177–Gln-196 has biased composition (acidic residues).

The protein belongs to the RimP family.

It localises to the cytoplasm. Functionally, required for maturation of 30S ribosomal subunits. This Roseobacter denitrificans (strain ATCC 33942 / OCh 114) (Erythrobacter sp. (strain OCh 114)) protein is Ribosome maturation factor RimP.